We begin with the raw amino-acid sequence, 95 residues long: Aspartyl/glutamyl-tRNA(Asn/Gln) amidotransferase subunit C (95 aa).

This sequence belongs to the GatC family. As to quaternary structure, heterotrimer of A, B and C subunits.

It carries out the reaction L-glutamyl-tRNA(Gln) + L-glutamine + ATP + H2O = L-glutaminyl-tRNA(Gln) + L-glutamate + ADP + phosphate + H(+). The enzyme catalyses L-aspartyl-tRNA(Asn) + L-glutamine + ATP + H2O = L-asparaginyl-tRNA(Asn) + L-glutamate + ADP + phosphate + 2 H(+). Functionally, allows the formation of correctly charged Asn-tRNA(Asn) or Gln-tRNA(Gln) through the transamidation of misacylated Asp-tRNA(Asn) or Glu-tRNA(Gln) in organisms which lack either or both of asparaginyl-tRNA or glutaminyl-tRNA synthetases. The reaction takes place in the presence of glutamine and ATP through an activated phospho-Asp-tRNA(Asn) or phospho-Glu-tRNA(Gln). The polypeptide is Aspartyl/glutamyl-tRNA(Asn/Gln) amidotransferase subunit C (Gluconobacter oxydans (strain 621H) (Gluconobacter suboxydans)).